A 164-amino-acid chain; its full sequence is Cold-inducible RNA-binding protein (164 aa).

The RRM domain maps to 6–84 (GKLFVGGLSF…RQIRVDQAGK (79 aa)). The tract at residues 65–164 (AGMNGKTVDG…SYRDSYDSYG (100 aa)) is disordered. The segment covering 93-118 (YRGGSSGGGRGFFRGGRGRGGGGYGG) has biased composition (gly residues). Over residues 155–164 (SYRDSYDSYG) the composition is skewed to basic and acidic residues.

In terms of assembly, interacts with prmt1. Interacts with elavl1/elrA (via RRM3). Associates with ribosomes. In terms of processing, methylated on arginine residues within RGG motifs. Methylation by prmt1 promotes cytoplasmic accumulation.

The protein localises to the nucleus. The protein resides in the nucleoplasm. Its subcellular location is the cytoplasm. Cold-inducible mRNA binding protein. Acts cooperatively with elavl1/elrA to stabilize AU-rich element (ARE)-containing mRNAs by binding to them and inhibiting their deadenylation. Essential for embryonic gastrulation and neural development, acting to maintain the expression of a set of adhesion molecules, and cell movement during embryogenesis. Required for pronephros development. May play a role in hibernation. This Aquarana catesbeiana (American bullfrog) protein is Cold-inducible RNA-binding protein.